Reading from the N-terminus, the 337-residue chain is tRNA N6-adenosine threonylcarbamoyltransferase (337 aa).

2 residues coordinate Fe cation: His114 and His118. Substrate is bound by residues 136-140 (LVSGG), Asp169, Gly182, Asp186, and Asn275. A Fe cation-binding site is contributed by Asp301.

Belongs to the KAE1 / TsaD family. Requires Fe(2+) as cofactor.

It localises to the cytoplasm. The enzyme catalyses L-threonylcarbamoyladenylate + adenosine(37) in tRNA = N(6)-L-threonylcarbamoyladenosine(37) in tRNA + AMP + H(+). In terms of biological role, required for the formation of a threonylcarbamoyl group on adenosine at position 37 (t(6)A37) in tRNAs that read codons beginning with adenine. Is involved in the transfer of the threonylcarbamoyl moiety of threonylcarbamoyl-AMP (TC-AMP) to the N6 group of A37, together with TsaE and TsaB. TsaD likely plays a direct catalytic role in this reaction. In Streptococcus uberis (strain ATCC BAA-854 / 0140J), this protein is tRNA N6-adenosine threonylcarbamoyltransferase.